Consider the following 438-residue polypeptide: UDP-N-acetylmuramoylalanine--D-glutamate ligase (438 aa).

112–118 (GSNGKST) provides a ligand contact to ATP.

The protein belongs to the MurCDEF family.

It is found in the cytoplasm. The catalysed reaction is UDP-N-acetyl-alpha-D-muramoyl-L-alanine + D-glutamate + ATP = UDP-N-acetyl-alpha-D-muramoyl-L-alanyl-D-glutamate + ADP + phosphate + H(+). It functions in the pathway cell wall biogenesis; peptidoglycan biosynthesis. Cell wall formation. Catalyzes the addition of glutamate to the nucleotide precursor UDP-N-acetylmuramoyl-L-alanine (UMA). The protein is UDP-N-acetylmuramoylalanine--D-glutamate ligase of Pectobacterium atrosepticum (strain SCRI 1043 / ATCC BAA-672) (Erwinia carotovora subsp. atroseptica).